We begin with the raw amino-acid sequence, 395 residues long: Acetate kinase 1 (395 aa).

A Mg(2+)-binding site is contributed by N8. K15 serves as a coordination point for ATP. R89 provides a ligand contact to substrate. The active-site Proton donor/acceptor is D146. ATP is bound by residues 206–210 (HIGNG), 283–285 (DMR), and 330–334 (GIGEN). A Mg(2+)-binding site is contributed by E382.

This sequence belongs to the acetokinase family. In terms of assembly, homodimer. Mg(2+) serves as cofactor. Mn(2+) is required as a cofactor.

It localises to the cytoplasm. The catalysed reaction is acetate + ATP = acetyl phosphate + ADP. The protein operates within metabolic intermediate biosynthesis; acetyl-CoA biosynthesis; acetyl-CoA from acetate: step 1/2. Catalyzes the formation of acetyl phosphate from acetate and ATP. Can also catalyze the reverse reaction. This chain is Acetate kinase 1, found in Lactococcus lactis subsp. lactis (strain IL1403) (Streptococcus lactis).